A 54-amino-acid chain; its full sequence is UPF0391 membrane protein BAB1_1670 (54 aa).

A run of 2 helical transmembrane segments spans residues 5–25 (VLVF…GIAG) and 29–48 (GIAQ…SLIA).

The protein belongs to the UPF0391 family.

It is found in the cell membrane. This Brucella abortus (strain 2308) protein is UPF0391 membrane protein BAB1_1670.